A 238-amino-acid polypeptide reads, in one-letter code: tRNA (guanine-N(7)-)-methyltransferase (238 aa).

S-adenosyl-L-methionine is bound by residues E68, E93, D120, and D143. The active site involves D143. Substrate is bound by residues K147, D179, and T216–E219.

The protein belongs to the class I-like SAM-binding methyltransferase superfamily. TrmB family.

It catalyses the reaction guanosine(46) in tRNA + S-adenosyl-L-methionine = N(7)-methylguanosine(46) in tRNA + S-adenosyl-L-homocysteine. It functions in the pathway tRNA modification; N(7)-methylguanine-tRNA biosynthesis. Its function is as follows. Catalyzes the formation of N(7)-methylguanine at position 46 (m7G46) in tRNA. In Aliivibrio fischeri (strain MJ11) (Vibrio fischeri), this protein is tRNA (guanine-N(7)-)-methyltransferase.